A 159-amino-acid chain; its full sequence is Ribosomal RNA large subunit methyltransferase H (159 aa).

S-adenosyl-L-methionine contacts are provided by residues I76, G108, and 127 to 132 (FSKMTF).

The protein belongs to the RNA methyltransferase RlmH family. As to quaternary structure, homodimer.

The protein localises to the cytoplasm. The enzyme catalyses pseudouridine(1915) in 23S rRNA + S-adenosyl-L-methionine = N(3)-methylpseudouridine(1915) in 23S rRNA + S-adenosyl-L-homocysteine + H(+). Its function is as follows. Specifically methylates the pseudouridine at position 1915 (m3Psi1915) in 23S rRNA. The polypeptide is Ribosomal RNA large subunit methyltransferase H (Clostridium botulinum (strain Loch Maree / Type A3)).